The primary structure comprises 352 residues: MDYQVSSPTYDIDYYTSEPCQKVNVKQIAARLLPPLYSLVFIFGFVGNILVVLILINCKRLKSMTDIYLLNLAISDLFFLLTVPFWAHYAAAQWDFGNTMCQLLTGLYFIGFFSGIFFIILLTIDRYLAIVHAVFALKARTVTFGVVTSVITWVVAVFASLPGIIFTRSQREGLHYTCSSHFPYSQYQFWKNFQTLKIVILGLVLPLLIMVICYSGILKTLLRCRNEKKRHRAVRLIFTIMIVYFLFWAPYNIVLLLNTFQEFFGLNNCSSSNRLDQAMQVTETLGMTHCCINPIIYAFVGEKFRNYLLVFFQKHIAKRFCKCCSIFQQEAPERASSVYTRSTGEHEISVGL.

The Extracellular segment spans residues 1–30 (MDYQVSSPTYDIDYYTSEPCQKVNVKQIAA). Residue Y3 is modified to Sulfotyrosine. S6 and S7 each carry an O-linked (GalNAc...) serine glycan. A sulfotyrosine mark is found at Y10, Y14, and Y15. 2 cysteine pairs are disulfide-bonded: C20/C269 and C101/C178. A helical transmembrane segment spans residues 31-58 (RLLPPLYSLVFIFGFVGNILVVLILINC). The Cytoplasmic segment spans residues 59-68 (KRLKSMTDIY). Residues 69–89 (LLNLAISDLFFLLTVPFWAHY) traverse the membrane as a helical segment. Topologically, residues 90–102 (AAAQWDFGNTMCQ) are extracellular. The chain crosses the membrane as a helical span at residues 103-124 (LLTGLYFIGFFSGIFFIILLTI). The Cytoplasmic segment spans residues 125 to 141 (DRYLAIVHAVFALKART). Residues 142–166 (VTFGVVTSVITWVVAVFASLPGIIF) form a helical membrane-spanning segment. Residues 167-198 (TRSQREGLHYTCSSHFPYSQYQFWKNFQTLKI) lie on the Extracellular side of the membrane. Residues 199-218 (VILGLVLPLLIMVICYSGIL) form a helical membrane-spanning segment. Residues 219 to 235 (KTLLRCRNEKKRHRAVR) are Cytoplasmic-facing. Residues 236-260 (LIFTIMIVYFLFWAPYNIVLLLNTF) form a helical membrane-spanning segment. At 261–277 (QEFFGLNNCSSSNRLDQ) the chain is on the extracellular side. The chain crosses the membrane as a helical span at residues 278–301 (AMQVTETLGMTHCCINPIIYAFVG). The Cytoplasmic segment spans residues 302–352 (EKFRNYLLVFFQKHIAKRFCKCCSIFQQEAPERASSVYTRSTGEHEISVGL). 3 S-palmitoyl cysteine lipidation sites follow: C321, C323, and C324. Phosphoserine; by BARK1 occurs at positions 336, 337, 342, and 349.

Belongs to the G-protein coupled receptor 1 family. Interacts with PRAF2. Efficient ligand binding to CCL3/MIP-1alpha and CCL4/MIP-1beta requires sulfation, O-glycosylation and sialic acid modifications. Glycosylation on Ser-6 is required for efficient binding of CCL4. Interacts with GRK2. Interacts with ARRB1 and ARRB2. Interacts with CNIH4. Interacts with S100A4; this interaction stimulates T-lymphocyte chemotaxis. In terms of processing, sulfated on at least 2 of the N-terminal tyrosines. Sulfation is required for efficient binding of the chemokines, CCL3 and CCL4. Post-translationally, palmitoylation in the C-terminal is important for cell surface expression. Phosphorylation on serine residues in the C-terminal is stimulated by binding CC chemokines especially by APO-RANTES. In terms of processing, O-glycosylated, but not N-glycosylated. Ser-6 appears to be the major site even if Ser-7 may be also O-glycosylated. Also sialylated glycans present which contribute to chemokine binding. Thr-16 and Ser-17 may also be glycosylated and, if so, with small moieties such as a T-antigen.

It is found in the cell membrane. Receptor for a number of inflammatory CC-chemokines including CCL3/MIP-1-alpha, CCL4/MIP-1-beta and RANTES and subsequently transduces a signal by increasing the intracellular calcium ion level. May play a role in the control of granulocytic lineage proliferation or differentiation. Participates in T-lymphocyte migration to the infection site by acting as a chemotactic receptor. In Pygathrix nemaeus (Red-shanked douc langur), this protein is C-C chemokine receptor type 5 (CCR5).